The sequence spans 348 residues: Putative olfactory receptor 3A4 (348 aa).

Residues 1-28 lie on the Extracellular side of the membrane; the sequence is MDLGNSGNDSVVTKFVLLGLTETAALQP. Asparagine 8 is a glycosylation site (N-linked (GlcNAc...) asparagine). A helical transmembrane segment spans residues 29–52; it reads ILFVIFLLAYVTTIGGTLSILAAI. The Cytoplasmic portion of the chain corresponds to 53–60; that stretch reads LMETKLHS. The chain crosses the membrane as a helical span at residues 61-82; it reads PMYFFLGNLSLPDVGCVSVTVP. Topologically, residues 83–103 are extracellular; the sequence is AMLSHFISNDRSIPYKACLSE. A disulfide bond links cysteine 100 and cysteine 192. The helical transmembrane segment at 104–123 threads the bilayer; it reads LFFFHLLAGADCFLLTIMAY. Residues 124-143 are Cytoplasmic-facing; that stretch reads DRYLAICQSLTYSSRMSWGI. A helical transmembrane segment spans residues 144-161; sequence QQALVGMSCVFSFTNALT. Over 162 to 199 the chain is Extracellular; the sequence is QTVALSPLNFCGPNVINHFYCDLPQPFQLSCSSVHLNG. Residues 200-222 traverse the membrane as a helical segment; the sequence is QLLFVAAAFMGVAPLVLITVSYA. Topologically, residues 223–239 are cytoplasmic; sequence HVAAAVLRIRSAEGRKK. The chain crosses the membrane as a helical span at residues 240-262; that stretch reads AFSTCSSHLTVVGIFYGTGVFSY. The Extracellular segment spans residues 263–275; that stretch reads TRLGSVESSDKDK. Residues 276–295 form a helical membrane-spanning segment; sequence GIGILNTVISPMLNPLIYWT. Topologically, residues 296-348 are cytoplasmic; that stretch reads SLLDVGCISHCSSDAGVSPGPPVQSSLCCLQFTALLSPPPGWGGLSPLNSHGL.

The protein belongs to the G-protein coupled receptor 1 family.

The protein localises to the cell membrane. Odorant receptor. The chain is Putative olfactory receptor 3A4 (OR3A4P) from Homo sapiens (Human).